Reading from the N-terminus, the 65-residue chain is Putative antitoxin MJECL31 (65 aa).

It belongs to the UPF0165 family.

In terms of biological role, possibly the antitoxin component of a type II toxin-antitoxin (TA) system. The chain is Putative antitoxin MJECL31 from Methanocaldococcus jannaschii (strain ATCC 43067 / DSM 2661 / JAL-1 / JCM 10045 / NBRC 100440) (Methanococcus jannaschii).